A 247-amino-acid polypeptide reads, in one-letter code: Uridylate kinase (247 aa).

An ATP-binding site is contributed by 15–18 (KLSG). The segment at 23-28 (GEEGFG) is involved in allosteric activation by GTP. Residue Gly57 coordinates UMP. The ATP site is built by Gly58 and Arg62. Residues Asp77 and 138-145 (TGNPFFTT) contribute to the UMP site. Positions 165, 171, and 174 each coordinate ATP.

This sequence belongs to the UMP kinase family. In terms of assembly, homohexamer.

Its subcellular location is the cytoplasm. The catalysed reaction is UMP + ATP = UDP + ADP. The protein operates within pyrimidine metabolism; CTP biosynthesis via de novo pathway; UDP from UMP (UMPK route): step 1/1. With respect to regulation, allosterically activated by GTP. Inhibited by UTP. In terms of biological role, catalyzes the reversible phosphorylation of UMP to UDP. This Pseudoalteromonas atlantica (strain T6c / ATCC BAA-1087) protein is Uridylate kinase.